The primary structure comprises 1258 residues: Serine/threonine-protein kinase Nek1 (1258 aa).

One can recognise a Protein kinase domain in the interval 4–258; sequence YVRLQKIGEG…VNSILEKGFI (255 aa). Residues 10-18 and K33 contribute to the ATP site; that span reads IGEGSFGKA. Catalysis depends on D128, which acts as the Proton acceptor. Phosphothreonine is present on T156. Phosphothreonine; by autocatalysis is present on T162. Residues 330-360 form a disordered region; that stretch reads HEKKPLQKHKQAHQTPEKRVNTGEERRKISE. The span at 344-360 shows a compositional bias: basic and acidic residues; sequence TPEKRVNTGEERRKISE. Phosphoserine occurs at positions 414, 418, 428, and 438. 3 disordered regions span residues 578-600, 648-669, and 685-704; these read KLRGEKKEANHSEGQEGSEEADM, KSSDVSPPLGQHETGGSPSKQQ, and VDSSLTDTRETSEEMQKTNN. Over residues 579 to 591 the composition is skewed to basic and acidic residues; sequence LRGEKKEANHSEG. At S653 the chain carries Phosphoserine. Phosphothreonine is present on T661. The residue at position 664 (S664) is a Phosphoserine. Residues 691-700 are compositionally biased toward basic and acidic residues; it reads DTRETSEEMQ. 6 positions are modified to phosphoserine: S798, S834, S868, S881, S1052, and S1126. Residues 1118–1171 form a disordered region; that stretch reads REQPGEEYSEEEESVLKNSDVEPTANGTDVADEDDNPSSESALNEEWHSDNSDG.

The protein belongs to the protein kinase superfamily. NEK Ser/Thr protein kinase family. NIMA subfamily. Binds to CBY2. Found in a complex with CFAP410, NEK1 and SPATA7. Interacts with CFAP410. Interacts (via Ser-1052 phosphorylated form) with 14-3-3 proteins. It depends on Mg(2+) as a cofactor. As to expression, high fetal expression in the brain and kidney.

The protein resides in the nucleus. It is found in the cytoplasm. It localises to the cytoskeleton. Its subcellular location is the microtubule organizing center. The protein localises to the centrosome. The enzyme catalyses L-seryl-[protein] + ATP = O-phospho-L-seryl-[protein] + ADP + H(+). The catalysed reaction is L-threonyl-[protein] + ATP = O-phospho-L-threonyl-[protein] + ADP + H(+). In terms of biological role, phosphorylates serines and threonines, but also appears to possess tyrosine kinase activity. Involved in DNA damage checkpoint control and for proper DNA damage repair. In response to injury that includes DNA damage, NEK1 phosphorylates VDAC1 to limit mitochondrial cell death. May be implicated in the control of meiosis. Involved in cilium assembly. In Homo sapiens (Human), this protein is Serine/threonine-protein kinase Nek1 (NEK1).